The primary structure comprises 158 residues: NAD(P)H-quinone oxidoreductase subunit J, chloroplastic (158 aa).

Belongs to the complex I 30 kDa subunit family. As to quaternary structure, NDH is composed of at least 16 different subunits, 5 of which are encoded in the nucleus.

The protein resides in the plastid. It is found in the chloroplast thylakoid membrane. It carries out the reaction a plastoquinone + NADH + (n+1) H(+)(in) = a plastoquinol + NAD(+) + n H(+)(out). The catalysed reaction is a plastoquinone + NADPH + (n+1) H(+)(in) = a plastoquinol + NADP(+) + n H(+)(out). Functionally, NDH shuttles electrons from NAD(P)H:plastoquinone, via FMN and iron-sulfur (Fe-S) centers, to quinones in the photosynthetic chain and possibly in a chloroplast respiratory chain. The immediate electron acceptor for the enzyme in this species is believed to be plastoquinone. Couples the redox reaction to proton translocation, and thus conserves the redox energy in a proton gradient. This is NAD(P)H-quinone oxidoreductase subunit J, chloroplastic from Nasturtium officinale (Watercress).